The chain runs to 266 residues: Glucosamine-6-phosphate deaminase (266 aa).

The Proton acceptor; for enolization step role is filled by D72. D141 serves as the catalytic For ring-opening step. Catalysis depends on H143, which acts as the Proton acceptor; for ring-opening step. E148 functions as the For ring-opening step in the catalytic mechanism.

It belongs to the glucosamine/galactosamine-6-phosphate isomerase family. NagB subfamily. In terms of assembly, homohexamer.

It catalyses the reaction alpha-D-glucosamine 6-phosphate + H2O = beta-D-fructose 6-phosphate + NH4(+). It functions in the pathway amino-sugar metabolism; N-acetylneuraminate degradation; D-fructose 6-phosphate from N-acetylneuraminate: step 5/5. Its activity is regulated as follows. Allosterically activated by N-acetylglucosamine 6-phosphate (GlcNAc6P). In terms of biological role, catalyzes the reversible isomerization-deamination of glucosamine 6-phosphate (GlcN6P) to form fructose 6-phosphate (Fru6P) and ammonium ion. The sequence is that of Glucosamine-6-phosphate deaminase from Salmonella typhi.